Consider the following 516-residue polypeptide: 3-ketoacyl-CoA synthase 4 (516 aa).

2 helical membrane passes run 48–68 and 87–107; these read LISN…SVEA and LVSI…YVMT. Residues 104–393 enclose the FAE domain; that stretch reads YVMTRPRPVY…FFMTLVVKKL (290 aa). Active-site residues include Cys248, His327, His411, His415, His444, and Asn448.

Belongs to the thiolase-like superfamily. Chalcone/stilbene synthases family. As to expression, expressed at low levels in siliques, flowers, leaves and stems.

Its subcellular location is the membrane. The enzyme catalyses a very-long-chain acyl-CoA + malonyl-CoA + H(+) = a very-long-chain 3-oxoacyl-CoA + CO2 + CoA. Its pathway is lipid metabolism; fatty acid biosynthesis. The sequence is that of 3-ketoacyl-CoA synthase 4 from Arabidopsis thaliana (Mouse-ear cress).